A 263-amino-acid chain; its full sequence is Hydroxyacylglutathione hydrolase (263 aa).

Zn(2+)-binding residues include H55, H57, D59, H60, H117, D134, and H172.

This sequence belongs to the metallo-beta-lactamase superfamily. Glyoxalase II family. In terms of assembly, monomer. Zn(2+) serves as cofactor.

The enzyme catalyses an S-(2-hydroxyacyl)glutathione + H2O = a 2-hydroxy carboxylate + glutathione + H(+). It participates in secondary metabolite metabolism; methylglyoxal degradation; (R)-lactate from methylglyoxal: step 2/2. Thiolesterase that catalyzes the hydrolysis of S-D-lactoyl-glutathione to form glutathione and D-lactic acid. The protein is Hydroxyacylglutathione hydrolase of Shewanella baltica (strain OS195).